Consider the following 422-residue polypeptide: Dihydrolipoyllysine-residue succinyltransferase component of 2-oxoglutarate dehydrogenase complex (422 aa).

Residues 1–76 form the Lipoyl-binding domain; that stretch reads MPEVKVPELA…EVGQAIAIIG (76 aa). The residue at position 42 (Lys-42) is an N6-lipoyllysine. The disordered stretch occupies residues 77 to 184; it reads EGSGNASKEN…APAKEEKKYN (108 aa). Composition is skewed to polar residues over residues 80 to 94 and 116 to 130; these read GNASKENSNDNTPQQ and NQANDDNQQRINATP. Residues 127–163 enclose the Peripheral subunit-binding (PSBD) domain; that stretch reads NATPSARRYARENGVNLAEVSPKTNDVVRKEDIDKKQ. The span at 152-163 shows a compositional bias: basic and acidic residues; it reads DVVRKEDIDKKQ. Positions 164–176 are enriched in low complexity; sequence QAPASTQTTQQAP. Active-site residues include His-393 and Asp-397.

Belongs to the 2-oxoacid dehydrogenase family. As to quaternary structure, forms a 24-polypeptide structural core with octahedral symmetry. Part of the 2-oxoglutarate dehydrogenase (OGDH) complex composed of E1 (2-oxoglutarate dehydrogenase), E2 (dihydrolipoamide succinyltransferase) and E3 (dihydrolipoamide dehydrogenase); the complex contains multiple copies of the three enzymatic components (E1, E2 and E3). The cofactor is (R)-lipoate.

The enzyme catalyses N(6)-[(R)-dihydrolipoyl]-L-lysyl-[protein] + succinyl-CoA = N(6)-[(R)-S(8)-succinyldihydrolipoyl]-L-lysyl-[protein] + CoA. The protein operates within amino-acid degradation; L-lysine degradation via saccharopine pathway; glutaryl-CoA from L-lysine: step 6/6. E2 component of the 2-oxoglutarate dehydrogenase (OGDH) complex which catalyzes the second step in the conversion of 2-oxoglutarate to succinyl-CoA and CO(2). The protein is Dihydrolipoyllysine-residue succinyltransferase component of 2-oxoglutarate dehydrogenase complex (odhB) of Staphylococcus aureus (strain Mu50 / ATCC 700699).